We begin with the raw amino-acid sequence, 270 residues long: uncharacterized protein (270 aa).

Positions 1-22 are cleaved as a signal peptide; the sequence is MGYIKRMALYMSVFLLIIFIVG. The N-palmitoyl cysteine moiety is linked to residue Cys23. A lipid anchor (S-diacylglycerol cysteine) is attached at Cys23.

This sequence belongs to the staphylococcal tandem lipoprotein family.

It localises to the cell membrane. This is an uncharacterized protein from Staphylococcus aureus (strain COL).